Reading from the N-terminus, the 645-residue chain is Acetyl-coenzyme A synthetase 2 (645 aa).

Residues 190-193, T308, and N332 contribute to the CoA site; that span reads RGGK. ATP-binding positions include 384–386, 408–413, D497, and R512; these read GEP and DTWWQT. CoA is bound at residue S520. An ATP-binding site is contributed by R523. Mg(2+)-binding residues include V534, H536, and V539. K606 bears the N6-acetyllysine mark.

The protein belongs to the ATP-dependent AMP-binding enzyme family. Mg(2+) serves as cofactor. Post-translationally, acetylated. Deacetylation by the SIR2-homolog deacetylase activates the enzyme.

It carries out the reaction acetate + ATP + CoA = acetyl-CoA + AMP + diphosphate. In terms of biological role, catalyzes the conversion of acetate into acetyl-CoA (AcCoA), an essential intermediate at the junction of anabolic and catabolic pathways. AcsA undergoes a two-step reaction. In the first half reaction, AcsA combines acetate with ATP to form acetyl-adenylate (AcAMP) intermediate. In the second half reaction, it can then transfer the acetyl group from AcAMP to the sulfhydryl group of CoA, forming the product AcCoA. The chain is Acetyl-coenzyme A synthetase 2 from Pseudomonas aeruginosa (strain ATCC 15692 / DSM 22644 / CIP 104116 / JCM 14847 / LMG 12228 / 1C / PRS 101 / PAO1).